The following is a 360-amino-acid chain: MLLILANWLEHYFDVFRVFHYLTLRGILGILTALVISFIVGPPMIRYLGSYKIGQTIRDDGPQSHLSKAGTPTMGGALILVTITVSTLLWSDLGNRYVWAVLLVTLAYGLIGFVDDYKKLVLKNSKGLAARYKYLWQSVFGLGAALFLYHTASSPQETQFIVPFFKQVVLNMGWLYVPLVYFVVVGSSNAVNLTDGLDGLAILPTVLVAGGLAIFAYASGHSEFSEYLGIPYLPKAGELVVFCGALVGAGLGFLWFNTYPAQVFMGDIGALALGAALGMVAVLVRQEIVLMIMGGIFVMETVSVMLQVLSFKLTGRRIFRMAPIHHHFELKGWPEPRVIVRFWIISVILVLIGLATLKLR.

The next 10 membrane-spanning stretches (helical) occupy residues 21–41, 70–90, 97–117, 134–154, 168–188, 199–219, 236–256, 263–283, 288–308, and 338–358; these read YLTL…FIVG, GTPT…TLLW, YVWA…VDDY, YLWQ…TASS, VVLN…VGSS, GLAI…AYAS, AGEL…FLWF, VFMG…VAVL, IVLM…MLQV, and VIVR…ATLK.

The protein belongs to the glycosyltransferase 4 family. MraY subfamily. Mg(2+) is required as a cofactor.

It is found in the cell inner membrane. The catalysed reaction is UDP-N-acetyl-alpha-D-muramoyl-L-alanyl-gamma-D-glutamyl-meso-2,6-diaminopimeloyl-D-alanyl-D-alanine + di-trans,octa-cis-undecaprenyl phosphate = di-trans,octa-cis-undecaprenyl diphospho-N-acetyl-alpha-D-muramoyl-L-alanyl-D-glutamyl-meso-2,6-diaminopimeloyl-D-alanyl-D-alanine + UMP. It functions in the pathway cell wall biogenesis; peptidoglycan biosynthesis. In terms of biological role, catalyzes the initial step of the lipid cycle reactions in the biosynthesis of the cell wall peptidoglycan: transfers peptidoglycan precursor phospho-MurNAc-pentapeptide from UDP-MurNAc-pentapeptide onto the lipid carrier undecaprenyl phosphate, yielding undecaprenyl-pyrophosphoryl-MurNAc-pentapeptide, known as lipid I. This is Phospho-N-acetylmuramoyl-pentapeptide-transferase from Methylococcus capsulatus (strain ATCC 33009 / NCIMB 11132 / Bath).